The primary structure comprises 881 residues: Phosphoenolpyruvate carboxylase (881 aa).

Catalysis depends on residues histidine 142 and lysine 547.

The protein belongs to the PEPCase type 1 family. The cofactor is Mg(2+).

The catalysed reaction is oxaloacetate + phosphate = phosphoenolpyruvate + hydrogencarbonate. Functionally, forms oxaloacetate, a four-carbon dicarboxylic acid source for the tricarboxylic acid cycle. This chain is Phosphoenolpyruvate carboxylase, found in Hahella chejuensis (strain KCTC 2396).